Reading from the N-terminus, the 276-residue chain is Large ribosomal subunit protein uL2 (276 aa).

The tract at residues 225 to 276 (VMNPVDHPHGGGEGKTAAGRDPVSPWGTPTKGYRTRSNKRTDSMIVQKRHKR) is disordered.

The protein belongs to the universal ribosomal protein uL2 family. Part of the 50S ribosomal subunit. Forms a bridge to the 30S subunit in the 70S ribosome.

Its function is as follows. One of the primary rRNA binding proteins. Required for association of the 30S and 50S subunits to form the 70S ribosome, for tRNA binding and peptide bond formation. It has been suggested to have peptidyltransferase activity; this is somewhat controversial. Makes several contacts with the 16S rRNA in the 70S ribosome. This chain is Large ribosomal subunit protein uL2, found in Cupriavidus taiwanensis (strain DSM 17343 / BCRC 17206 / CCUG 44338 / CIP 107171 / LMG 19424 / R1) (Ralstonia taiwanensis (strain LMG 19424)).